The primary structure comprises 458 residues: Exodeoxyribonuclease 7 large subunit (458 aa).

It belongs to the XseA family. Heterooligomer composed of large and small subunits.

The protein localises to the cytoplasm. It carries out the reaction Exonucleolytic cleavage in either 5'- to 3'- or 3'- to 5'-direction to yield nucleoside 5'-phosphates.. Bidirectionally degrades single-stranded DNA into large acid-insoluble oligonucleotides, which are then degraded further into small acid-soluble oligonucleotides. This Halalkalibacterium halodurans (strain ATCC BAA-125 / DSM 18197 / FERM 7344 / JCM 9153 / C-125) (Bacillus halodurans) protein is Exodeoxyribonuclease 7 large subunit.